We begin with the raw amino-acid sequence, 376 residues long: Small ribosomal subunit protein uS11m (376 aa).

This sequence belongs to the universal ribosomal protein uS11 family. In terms of assembly, component of the mitochondrial small ribosomal subunit (mt-SSU). Mature N.crassa 74S mitochondrial ribosomes consist of a small (37S) and a large (54S) subunit. The 37S small subunit contains a 16S ribosomal RNA (16S mt-rRNA) and 32 different proteins. The 54S large subunit contains a 23S rRNA (23S mt-rRNA) and 42 different proteins.

It localises to the mitochondrion. Component of the mitochondrial ribosome (mitoribosome), a dedicated translation machinery responsible for the synthesis of mitochondrial genome-encoded proteins, including at least some of the essential transmembrane subunits of the mitochondrial respiratory chain. The mitoribosomes are attached to the mitochondrial inner membrane and translation products are cotranslationally integrated into the membrane. The protein is Small ribosomal subunit protein uS11m (mrps18) of Neurospora crassa (strain ATCC 24698 / 74-OR23-1A / CBS 708.71 / DSM 1257 / FGSC 987).